Here is a 229-residue protein sequence, read N- to C-terminus: MLSGLIQRFEEEKMKHNQDRVEELSLVRVDDTISQPPRYAPSAPMPSSMPTVALEILDKAMSNTTGATQTQKAEKAAFASYAEAFRDDVRLRQIKRHVNEQILPKLKSDLSELKKKRAIIHTTLLVAAVVALLTSVCTLSSDMSVAFKINGTKTEVPSWFKSLNPMLGVVNLGATFLMMVCAKSERALNQQIDMIKKEVMKKQSYNDAVRMSFTEFSSIPLDGFEMPLT.

Positions 14 to 26 are CCM-I; the sequence is MKHNQDRVEELSL. Positions 94–116 are CCM-III; that stretch reads IKRHVNEQILPKLKSDLSELKKK. Transmembrane regions (helical) follow at residues 119–139 and 162–182; these read IIHTTLLVAAVVALLTSVCTL and SLNPMLGVVNLGATFLMMVCA. Residues 185 to 198 are CCM-II; it reads ERALNQQIDMIKKE.

It belongs to the orbivirus NS3 family. As to quaternary structure, forms homooligomers via coiled-coil motif. Interacts with host OPTN; this interaction inhibits innate immune response.

It is found in the host cell membrane. It localises to the host Golgi apparatus. Functionally, plays a role in the inhibition of host innate immune response. Interacts with host OPTN and thus inhibits the recruitment of TBK1 to the host Golgi apparatus. In turn, downstream partner IRF3 cannot be activated and IFN-beta production is impaired. Facilitates viral particle release either by increasing plasma membrane permeability through a viroporin-like activity or by viral budding. The chain is Non-structural protein P8 (Segment-10) from Bluetongue virus 10 (isolate USA) (BTV 10).